A 656-amino-acid chain; its full sequence is MLFKLVTFSRPIQITQTIPLLISQSRRTIARSLSTTSRWLASDDDDTRFDQIPVQRIRNFSIIAHVDHGKSTLADRLLELTGTIAKKAGNKQVLDSLQVEKERGITVKAQTASLVYPYEGETYLLNLIDTPGHVDFSNEVSRSLAACDGVILLVDANEGVQAQTVANFHLARAKQLVIVPVLNKIDLKNARPDAVAQELFTLFEIDPDEVLRISAKIGTGCDAVLKEIVRRLPPPDARREQNFRALIFDSWFDRYRGALNLVFVKDGEIRTGQEIVSCHTGKAYEVKSLAMLRPDERKVDRLVAGQVGLLGCNMRTSKESNIGDTLYAKKDKTCVPLPGFKPQQPMVFAGVYPADQSQHPYLKSAIEKLVLNDSAVTVSPDSSPALGQGWRLGFLGLLHLDVFSQRLQQEYDADPILTAPSVTYRIKLKGAKIIAAHGGNEEIYVSNPALFPDKTMVEEYYEPYVLGTIIAPTECTGPIIGLCVERRAIQKTSINIDNDRIMTTYLMPLNEIVLDFHDQLKSISSGYASFDYEDHGYVPSALVRMDILLNGQLVDELCTVVHISKAQSHAKELVLKLKELIPRQMVQIAIQAVVGGKVVARETLKAYRKDVTSKLYGGDVTRRMKLLKQQSEGKKKMRAIANINVPKDTFINVLKR.

Residues 55–236 (QRIRNFSIIA…EIVRRLPPPD (182 aa)) enclose the tr-type G domain. GTP-binding positions include 64–71 (AHVDHGKS), 129–133 (DTPGH), and 183–186 (NKID).

It belongs to the TRAFAC class translation factor GTPase superfamily. Classic translation factor GTPase family. LepA subfamily.

It is found in the mitochondrion inner membrane. The catalysed reaction is GTP + H2O = GDP + phosphate + H(+). Functionally, promotes mitochondrial protein synthesis. May act as a fidelity factor of the translation reaction, by catalyzing a one-codon backward translocation of tRNAs on improperly translocated ribosomes. Binds to mitochondrial ribosomes in a GTP-dependent manner. This is Translation factor GUF1 homolog, mitochondrial from Aedes aegypti (Yellowfever mosquito).